The following is a 344-amino-acid chain: Eukaryotic translation initiation factor 2 subunit alpha (344 aa).

The 72-residue stretch at 21-92 (DMAVMIQVKT…ERGYIDLSKR (72 aa)) folds into the S1 motif domain. Serine 56 bears the Phosphoserine; by GCN2 mark. The disordered stretch occupies residues 309–344 (LRMDNEEMSGDEGSEDEEEDTGMGEVDIDGGSGIIE). Over residues 314 to 336 (EEMSGDEGSEDEEEDTGMGEVDI) the composition is skewed to acidic residues. 2 positions are modified to phosphoserine; by CK2: serine 317 and serine 322.

The protein belongs to the eIF-2-alpha family. Eukaryotic translation initiation factor 2 eIF2 is a heterotrimeric complex composed of an alpha, a beta and a gamma subunit. Phosphorylated at Ser-56 by GCN2. Phosphorylated at Ser-317 and Ser-322 by CK2.

It is found in the cytoplasm. The protein localises to the cytosol. Functions in the early steps of protein synthesis by forming a ternary complex with GTP and initiator tRNA. This complex binds to a 40S ribosomal subunit, followed by mRNA binding to form a 43S pre-initiation complex. Junction of the 60S ribosomal subunit to form the 80S initiation complex is preceded by hydrolysis of the GTP bound to eIF-2 and release of an eIF-2-GDP binary complex. In order for eIF-2 to recycle and catalyze another round of initiation, the GDP bound to eIF-2 must exchange with GTP by way of a reaction catalyzed by eIF2B. This chain is Eukaryotic translation initiation factor 2 subunit alpha, found in Arabidopsis thaliana (Mouse-ear cress).